Reading from the N-terminus, the 186-residue chain is Ribosome rescue factor SmrB (186 aa).

A Smr domain is found at 99 to 174 (IDLHGLTQHQ…SDAAIIVIIE (76 aa)).

The protein belongs to the SmrB family. Associates with collided ribosomes, but not with correctly translating polysomes.

Its function is as follows. Acts as a ribosome collision sensor. Detects stalled/collided disomes (pairs of ribosomes where the leading ribosome is stalled and a second ribosome has collided with it) and endonucleolytically cleaves mRNA at the 5' boundary of the stalled ribosome. Stalled/collided disomes form a new interface (primarily via the 30S subunits) that binds SmrB. Cleaved mRNA becomes available for tmRNA ligation, leading to ribosomal subunit dissociation and rescue of stalled ribosomes. The protein is Ribosome rescue factor SmrB of Buchnera aphidicola subsp. Acyrthosiphon pisum (strain 5A).